The following is a 333-amino-acid chain: Holliday junction branch migration complex subunit RuvB (333 aa).

A large ATPase domain (RuvB-L) region spans residues 1-182; that stretch reads MTNRILDMEQ…FGITGHMEYY (182 aa). ATP is bound by residues Leu21, Arg22, Gly63, Lys66, Thr67, Thr68, 129 to 131, Arg172, Tyr182, and Arg219; that span reads EDF. Thr67 contributes to the Mg(2+) binding site. Residues 183–253 are small ATPAse domain (RuvB-S); that stretch reads ELADLTEIVE…ITDKALTMLD (71 aa). Residues 256–333 are head domain (RuvB-H); it reads REGLDYVDQK…EHLGYPYTEK (78 aa). DNA is bound by residues Arg292, Arg311, Arg313, and Arg316.

Belongs to the RuvB family. Homohexamer. Forms an RuvA(8)-RuvB(12)-Holliday junction (HJ) complex. HJ DNA is sandwiched between 2 RuvA tetramers; dsDNA enters through RuvA and exits via RuvB. An RuvB hexamer assembles on each DNA strand where it exits the tetramer. Each RuvB hexamer is contacted by two RuvA subunits (via domain III) on 2 adjacent RuvB subunits; this complex drives branch migration. In the full resolvosome a probable DNA-RuvA(4)-RuvB(12)-RuvC(2) complex forms which resolves the HJ.

It is found in the cytoplasm. It catalyses the reaction ATP + H2O = ADP + phosphate + H(+). The RuvA-RuvB-RuvC complex processes Holliday junction (HJ) DNA during genetic recombination and DNA repair, while the RuvA-RuvB complex plays an important role in the rescue of blocked DNA replication forks via replication fork reversal (RFR). RuvA specifically binds to HJ cruciform DNA, conferring on it an open structure. The RuvB hexamer acts as an ATP-dependent pump, pulling dsDNA into and through the RuvAB complex. RuvB forms 2 homohexamers on either side of HJ DNA bound by 1 or 2 RuvA tetramers; 4 subunits per hexamer contact DNA at a time. Coordinated motions by a converter formed by DNA-disengaged RuvB subunits stimulates ATP hydrolysis and nucleotide exchange. Immobilization of the converter enables RuvB to convert the ATP-contained energy into a lever motion, pulling 2 nucleotides of DNA out of the RuvA tetramer per ATP hydrolyzed, thus driving DNA branch migration. The RuvB motors rotate together with the DNA substrate, which together with the progressing nucleotide cycle form the mechanistic basis for DNA recombination by continuous HJ branch migration. Branch migration allows RuvC to scan DNA until it finds its consensus sequence, where it cleaves and resolves cruciform DNA. This chain is Holliday junction branch migration complex subunit RuvB, found in Streptococcus suis (strain 98HAH33).